The chain runs to 74 residues: NAD(P)H-quinone oxidoreductase subunit L (74 aa).

2 helical membrane-spanning segments follow: residues 5-25 and 43-63; these read LIIAALYLALAGAYLLVVPAA and AFMYFLVFFFFPGLLLLAPLL.

Belongs to the complex I NdhL subunit family. In terms of assembly, NDH-1 can be composed of about 15 different subunits; different subcomplexes with different compositions have been identified which probably have different functions.

It localises to the cellular thylakoid membrane. It carries out the reaction a plastoquinone + NADH + (n+1) H(+)(in) = a plastoquinol + NAD(+) + n H(+)(out). The catalysed reaction is a plastoquinone + NADPH + (n+1) H(+)(in) = a plastoquinol + NADP(+) + n H(+)(out). In terms of biological role, NDH-1 shuttles electrons from an unknown electron donor, via FMN and iron-sulfur (Fe-S) centers, to quinones in the respiratory and/or the photosynthetic chain. The immediate electron acceptor for the enzyme in this species is believed to be plastoquinone. Couples the redox reaction to proton translocation, and thus conserves the redox energy in a proton gradient. Cyanobacterial NDH-1 also plays a role in inorganic carbon-concentration. In Synechococcus elongatus (strain ATCC 33912 / PCC 7942 / FACHB-805) (Anacystis nidulans R2), this protein is NAD(P)H-quinone oxidoreductase subunit L.